Consider the following 603-residue polypeptide: Variable flagella 3 (603 aa).

Positions 169-289 form a coiled coil; the sequence is GGEVSAELRR…TEDLEARDRR (121 aa). Over residues 288-297 the composition is skewed to basic and acidic residues; sequence RRMNSTDRIR. Disordered regions lie at residues 288–526 and 539–564; these read RRMN…PARA and AGRGGSLQGDDASSAHGEHMSQSSKS. The span at 337–348 shows a compositional bias: low complexity; sequence SRSNSRGRGTSS. A compositionally biased stretch (basic and acidic residues) spans 364–380; sequence PRFDPTEYVRQRKERES. Residues 397–406 show a composition bias toward polar residues; that stretch reads AGTSRASSVV. Positions 486–510 are enriched in gly residues; it reads GASGGGAGGWSKFPGGGGGGVGGSG. Over residues 511-520 the composition is skewed to polar residues; it reads QRISSNSPRS.

The protein belongs to the CCDC61 family.

It is found in the cytoplasm. It localises to the cytoskeleton. The protein resides in the flagellum basal body. In terms of biological role, required for normal flagella and striated fiber formation. The protein is Variable flagella 3 of Chlamydomonas reinhardtii (Chlamydomonas smithii).